A 307-amino-acid chain; its full sequence is 3-methyl-2-oxobutanoate hydroxymethyltransferase (307 aa).

2 residues coordinate Mg(2+): D61 and D100. Residues 61-62 (DS), D100, and K130 contribute to the 3-methyl-2-oxobutanoate site. Residue E132 coordinates Mg(2+). The Proton acceptor role is filled by E199.

It belongs to the PanB family. Homodecamer; pentamer of dimers. Mg(2+) is required as a cofactor.

It localises to the cytoplasm. The catalysed reaction is 3-methyl-2-oxobutanoate + (6R)-5,10-methylene-5,6,7,8-tetrahydrofolate + H2O = 2-dehydropantoate + (6S)-5,6,7,8-tetrahydrofolate. It participates in cofactor biosynthesis; (R)-pantothenate biosynthesis; (R)-pantoate from 3-methyl-2-oxobutanoate: step 1/2. Its function is as follows. Catalyzes the reversible reaction in which hydroxymethyl group from 5,10-methylenetetrahydrofolate is transferred onto alpha-ketoisovalerate to form ketopantoate. The chain is 3-methyl-2-oxobutanoate hydroxymethyltransferase from Nitratidesulfovibrio vulgaris (strain ATCC 29579 / DSM 644 / CCUG 34227 / NCIMB 8303 / VKM B-1760 / Hildenborough) (Desulfovibrio vulgaris).